A 321-amino-acid polypeptide reads, in one-letter code: Probable arabinan endo-1,5-alpha-L-arabinosidase A (321 aa).

The N-terminal stretch at 1-19 (MSASVFVVVASCLAALAHG) is a signal peptide. Asp34 acts as the Proton acceptor in catalysis. Residue Glu200 is the Proton donor of the active site.

This sequence belongs to the glycosyl hydrolase 43 family.

It localises to the secreted. It carries out the reaction Endohydrolysis of (1-&gt;5)-alpha-arabinofuranosidic linkages in (1-&gt;5)-arabinans.. The protein operates within glycan metabolism; L-arabinan degradation. Endo-1,5-alpha-L-arabinanase involved in degradation of pectin. Its preferred substrate is linear 1,5-alpha-L-arabinan. The sequence is that of Probable arabinan endo-1,5-alpha-L-arabinosidase A (abnA) from Aspergillus fumigatus (strain ATCC MYA-4609 / CBS 101355 / FGSC A1100 / Af293) (Neosartorya fumigata).